A 239-amino-acid polypeptide reads, in one-letter code: Pyridoxine 5'-phosphate synthase (239 aa).

Residue N7 participates in 3-amino-2-oxopropyl phosphate binding. 9-10 (DH) lines the 1-deoxy-D-xylulose 5-phosphate pocket. Residue R18 coordinates 3-amino-2-oxopropyl phosphate. H43 functions as the Proton acceptor in the catalytic mechanism. 1-deoxy-D-xylulose 5-phosphate-binding residues include R45 and H50. The active-site Proton acceptor is the E70. 1-deoxy-D-xylulose 5-phosphate is bound at residue T100. The Proton donor role is filled by H191. Residues G192 and 213 to 214 (GH) contribute to the 3-amino-2-oxopropyl phosphate site.

The protein belongs to the PNP synthase family. In terms of assembly, homooctamer; tetramer of dimers.

It localises to the cytoplasm. The enzyme catalyses 3-amino-2-oxopropyl phosphate + 1-deoxy-D-xylulose 5-phosphate = pyridoxine 5'-phosphate + phosphate + 2 H2O + H(+). Its pathway is cofactor biosynthesis; pyridoxine 5'-phosphate biosynthesis; pyridoxine 5'-phosphate from D-erythrose 4-phosphate: step 5/5. In terms of biological role, catalyzes the complicated ring closure reaction between the two acyclic compounds 1-deoxy-D-xylulose-5-phosphate (DXP) and 3-amino-2-oxopropyl phosphate (1-amino-acetone-3-phosphate or AAP) to form pyridoxine 5'-phosphate (PNP) and inorganic phosphate. In Desulforapulum autotrophicum (strain ATCC 43914 / DSM 3382 / VKM B-1955 / HRM2) (Desulfobacterium autotrophicum), this protein is Pyridoxine 5'-phosphate synthase.